The following is a 1302-amino-acid chain: Cingulin-like protein 1 (1302 aa).

Residues 1-554 (MELYFGEYQH…ELTQQTNEET (554 aa)) are head. Positions 37 to 51 (AGSYGVSIRVQGIDG) match the ZIM motif. The segment at 75-104 (PFPPPVINNLPLHSSNGSVPKENSEELQLP) is disordered. Residues serine 112 and serine 202 each carry the phosphoserine modification. 3 disordered regions span residues 186–209 (KKPWTCFPKPSNSQPTSPSLEDPA), 251–305 (FTSG…TPTS), and 364–392 (PGLQRRGRSGKRNRINTDDRKRSRSVDSA). Over residues 195 to 204 (PSNSQPTSPS) the composition is skewed to polar residues. Over residues 264–282 (AHPETKKTRPDVLPFRRQD) the composition is skewed to basic and acidic residues. Serine 283, serine 297, and serine 298 each carry phosphoserine. Residues 296-305 (SSSSSTTPTS) show a composition bias toward low complexity. Positions 366–377 (LQRRGRSGKRNR) are enriched in basic residues. The segment covering 378-388 (INTDDRKRSRS) has biased composition (basic and acidic residues). 3 positions are modified to phosphoserine: serine 388, serine 391, and serine 486. The stretch at 604–1258 (NSTSEVKDLL…QLNSMKKDLR (655 aa)) forms a coiled coil. The segment covering 655–664 (RSQHNEKVEE) has biased composition (basic and acidic residues). The disordered stretch occupies residues 655–675 (RSQHNEKVEENSTLQQRLEES). Residue serine 708 is modified to Phosphoserine. Disordered stretches follow at residues 903 to 929 (AAQGNLSQTTQEQKQLSEKLKEESEQK) and 1263 to 1287 (PSKVLDDMDDDDDLSTDGGSLYEAP). Residues 917–929 (QLSEKLKEESEQK) show a composition bias toward basic and acidic residues. The tail stretch occupies residues 1263-1302 (PSKVLDDMDDDDDLSTDGGSLYEAPVSYTFSKDSTVASQI).

It belongs to the cingulin family. As to quaternary structure, homodimer or oligomer. Interacts with CD2AP and SH3BP1; probably part of a complex at cell junctions. Smooth muscle, spleen, testis, fetal brain, amygdala, corpus callosum, cerebellum, thalamus and subthalamic nucleus of adult brain.

The protein resides in the cell junction. It localises to the tight junction. Its function is as follows. May be involved in anchoring the apical junctional complex, especially tight junctions, to actin-based cytoskeletons. This is Cingulin-like protein 1 (CGNL1) from Homo sapiens (Human).